The chain runs to 160 residues: Cyclic pyranopterin monophosphate synthase (160 aa).

Residues 73 to 75 and 110 to 111 each bind substrate; these read LCH and ME. Aspartate 125 is an active-site residue.

Belongs to the MoaC family. As to quaternary structure, homohexamer; trimer of dimers.

It carries out the reaction (8S)-3',8-cyclo-7,8-dihydroguanosine 5'-triphosphate = cyclic pyranopterin phosphate + diphosphate. The protein operates within cofactor biosynthesis; molybdopterin biosynthesis. In terms of biological role, catalyzes the conversion of (8S)-3',8-cyclo-7,8-dihydroguanosine 5'-triphosphate to cyclic pyranopterin monophosphate (cPMP). The protein is Cyclic pyranopterin monophosphate synthase of Pseudomonas paraeruginosa (strain DSM 24068 / PA7) (Pseudomonas aeruginosa (strain PA7)).